A 138-amino-acid chain; its full sequence is Protein FAM136A (138 aa).

The protein belongs to the FAM136 family.

This Xenopus tropicalis (Western clawed frog) protein is Protein FAM136A (fam136a).